Consider the following 301-residue polypeptide: Sulfate adenylyltransferase subunit 2 2 (301 aa).

Belongs to the PAPS reductase family. CysD subfamily. Heterodimer composed of CysD, the smaller subunit, and CysN.

It carries out the reaction sulfate + ATP + H(+) = adenosine 5'-phosphosulfate + diphosphate. It functions in the pathway sulfur metabolism; hydrogen sulfide biosynthesis; sulfite from sulfate: step 1/3. Its function is as follows. With CysN forms the ATP sulfurylase (ATPS) that catalyzes the adenylation of sulfate producing adenosine 5'-phosphosulfate (APS) and diphosphate, the first enzymatic step in sulfur assimilation pathway. APS synthesis involves the formation of a high-energy phosphoric-sulfuric acid anhydride bond driven by GTP hydrolysis by CysN coupled to ATP hydrolysis by CysD. This is Sulfate adenylyltransferase subunit 2 2 from Shewanella sediminis (strain HAW-EB3).